The chain runs to 51 residues: Large ribosomal subunit protein eL39 (51 aa).

The protein belongs to the eukaryotic ribosomal protein eL39 family. In terms of assembly, interacts with YIH1.

The chain is Large ribosomal subunit protein eL39 (RPL39) from Kluyveromyces marxianus (Yeast).